The sequence spans 154 residues: MHCPFCGANDTKVIDSRLVAEGEQVRRRRECLACGERFTTFETAELVMPRLIKTDGSRQPFDEEKLRAGMQRALEKRPVSVERLEAALVHIKHKLRATGEREVKSLVVGELVMTELQKLDEVAYIRFASVYRRFQDLNEFREEIDRLAREPAKQ.

A zinc finger spans residues Cys3–Cys34. The region spanning Pro49–Glu139 is the ATP-cone domain.

It belongs to the NrdR family. Zn(2+) is required as a cofactor.

Functionally, negatively regulates transcription of bacterial ribonucleotide reductase nrd genes and operons by binding to NrdR-boxes. The protein is Transcriptional repressor NrdR of Pseudomonas fluorescens (strain ATCC BAA-477 / NRRL B-23932 / Pf-5).